We begin with the raw amino-acid sequence, 161 residues long: Regulator of ribonuclease activity A (161 aa).

It belongs to the RraA family. Homotrimer. Binds to both RNA-binding sites in the C-terminal region of Rne and to RhlB.

Its subcellular location is the cytoplasm. Globally modulates RNA abundance by binding to RNase E (Rne) and regulating its endonucleolytic activity. Can modulate Rne action in a substrate-dependent manner by altering the composition of the degradosome. Modulates RNA-binding and helicase activities of the degradosome. The polypeptide is Regulator of ribonuclease activity A (Sodalis glossinidius (strain morsitans)).